A 198-amino-acid chain; its full sequence is Nucleoid occlusion factor SlmA (198 aa).

One can recognise an HTH tetR-type domain in the interval 10–70 (NRREEILQSL…SLIEFIEDSL (61 aa)). A DNA-binding region (H-T-H motif) is located at residues 33 to 52 (TTAKLAASVGVSEAALYRHF). Residues 117-144 (EQDRLQGRINQLFERIEAQLRQVLREKR) are a coiled coil.

The protein belongs to the nucleoid occlusion factor SlmA family. As to quaternary structure, homodimer. Interacts with FtsZ.

Its subcellular location is the cytoplasm. It localises to the nucleoid. In terms of biological role, required for nucleoid occlusion (NO) phenomenon, which prevents Z-ring formation and cell division over the nucleoid. Acts as a DNA-associated cell division inhibitor that binds simultaneously chromosomal DNA and FtsZ, and disrupts the assembly of FtsZ polymers. SlmA-DNA-binding sequences (SBS) are dispersed on non-Ter regions of the chromosome, preventing FtsZ polymerization at these regions. In Salmonella typhi, this protein is Nucleoid occlusion factor SlmA.